We begin with the raw amino-acid sequence, 378 residues long: Cell surface mannoprotein MP65 (378 aa).

The signal sequence occupies residues 1-32 (MLFKSFVTFTVLANALAAPLAHQHHQHKEEKR). Residues 67–124 (VSVSVNTEPPQNHPTTTQDVASASTYPSSTDGSAASSSAAASSSSQAGSEPSGGVGSG) are disordered. Residues 72–93 (NTEPPQNHPTTTQDVASASTYP) show a composition bias toward polar residues. A compositionally biased stretch (low complexity) spans 94 to 116 (SSTDGSAASSSAAASSSSQAGSE). Glu316 serves as the catalytic Nucleophile.

This sequence belongs to the glycosyl hydrolase 17 family. In terms of assembly, component of a multiprotein complex of 250 kDa composed of at least HYR1, MP65, and PRA1. Post-translationally, glycosylated protein with a polysaccharide moiety composed exclusively of mannose and glucose at a ratio of 12.7 to 1. Contributes highly to the carbohydrate component of the matrix. Treatment with tunicamycin impairs glycosylation.

It localises to the secreted. The protein localises to the cell wall. Its function is as follows. Surface mannoprotein required for hyphal morphogenesis, surface adherence, and pathogenicity. Contributes in a high proportion to the carbohydrate component of the matrix due to high levels of glycosylation and may play important roles during biofilm development and maintenance. Acts as a major antigen target of host cell-mediated immune response. Induces extensive T-cell proliferation of human peripheral blood mononuclear cells. Facilitates host dendritic cells maturation and promotes cytokine production through its glycosylated portion while its protein core is essentially involved in induction of T-cell response. The sequence is that of Cell surface mannoprotein MP65 (MP65) from Candida albicans (strain SC5314 / ATCC MYA-2876) (Yeast).